Here is a 505-residue protein sequence, read N- to C-terminus: Maturase K (505 aa).

The protein belongs to the intron maturase 2 family. MatK subfamily.

Its subcellular location is the plastid. The protein localises to the chloroplast. In terms of biological role, usually encoded in the trnK tRNA gene intron. Probably assists in splicing its own and other chloroplast group II introns. The protein is Maturase K of Micranthes integrifolia (Wholeleaf saxifrage).